A 101-amino-acid chain; its full sequence is Urease subunit beta (101 aa).

It belongs to the urease beta subunit family. As to quaternary structure, heterotrimer of UreA (gamma), UreB (beta) and UreC (alpha) subunits. Three heterotrimers associate to form the active enzyme.

It localises to the cytoplasm. It catalyses the reaction urea + 2 H2O + H(+) = hydrogencarbonate + 2 NH4(+). It functions in the pathway nitrogen metabolism; urea degradation; CO(2) and NH(3) from urea (urease route): step 1/1. This is Urease subunit beta from Ralstonia pickettii (strain 12J).